A 269-amino-acid polypeptide reads, in one-letter code: MVWFFEYYDGCGLAIKVKKKLYEAEGVQKVEIYETESMGKMLVIDGKIQLTELDEPFYHEMLVHVPMLSHENPRKVAVIGGGDGGALREVLKHNVERAVLVDIDRNVIDLSRKFLKIDHGAFEDERVEIAIMDGKEFLRDCEIFDVIIVDSTDPVGVSDTLFDREFFELARQKCDVISLQSQSPLIQKEYFRTLLVNSAPFERRDVYLSCVPTYPLALWSFIIGGEYDFSNLEERFERIKGKTVHYNPDVHRAAFALPEWLKKEVEACI.

The 226-residue stretch at 1–226 (MVWFFEYYDG…ALWSFIIGGE (226 aa)) folds into the PABS domain. Residue Gln28 coordinates S-methyl-5'-thioadenosine. Residues His59 and Asp83 each coordinate spermidine. Residues Asp102 and 133–134 (DG) each bind S-methyl-5'-thioadenosine. The Proton acceptor role is filled by Asp150. Residue 150–153 (DSTD) coordinates spermidine.

This sequence belongs to the spermidine/spermine synthase family. As to quaternary structure, homodimer or homotetramer.

Its subcellular location is the cytoplasm. The enzyme catalyses S-adenosyl 3-(methylsulfanyl)propylamine + putrescine = S-methyl-5'-thioadenosine + spermidine + H(+). The protein operates within amine and polyamine biosynthesis; spermidine biosynthesis; spermidine from putrescine: step 1/1. Its function is as follows. Catalyzes the irreversible transfer of a propylamine group from the amino donor S-adenosylmethioninamine (decarboxy-AdoMet) to putrescine (1,4-diaminobutane) to yield spermidine. In Archaeoglobus fulgidus (strain ATCC 49558 / DSM 4304 / JCM 9628 / NBRC 100126 / VC-16), this protein is Polyamine aminopropyltransferase.